The primary structure comprises 140 residues: Small ribosomal subunit protein uS19 (140 aa).

The segment at 43-71 (IERGLTTEQQKLRETVRDADPQKTANDPI) is disordered. Basic and acidic residues predominate over residues 52–63 (QKLRETVRDADP).

It belongs to the universal ribosomal protein uS19 family.

Its function is as follows. Protein S19 forms a complex with S13 that binds strongly to the 16S ribosomal RNA. This is Small ribosomal subunit protein uS19 from Haloquadratum walsbyi (strain DSM 16790 / HBSQ001).